The chain runs to 392 residues: Chaperone protein DnaJ (392 aa).

Residues 2 to 67 (DYYTILGVAK…QKRESYDRYG (66 aa)) enclose the J domain. The CR-type zinc finger occupies 149–227 (GVEKELLVSG…CRGQGRIKDK (79 aa)). Residues Cys162, Cys165, Cys179, Cys182, Cys201, Cys204, Cys215, and Cys218 each coordinate Zn(2+). 4 CXXCXGXG motif repeats span residues 162–169 (CDACSGSG), 179–186 (CDRCKGSG), 201–208 (CPDCSGEG), and 215–222 (CSECRGQG).

The protein belongs to the DnaJ family. In terms of assembly, homodimer. Requires Zn(2+) as cofactor.

The protein localises to the cytoplasm. Participates actively in the response to hyperosmotic and heat shock by preventing the aggregation of stress-denatured proteins and by disaggregating proteins, also in an autonomous, DnaK-independent fashion. Unfolded proteins bind initially to DnaJ; upon interaction with the DnaJ-bound protein, DnaK hydrolyzes its bound ATP, resulting in the formation of a stable complex. GrpE releases ADP from DnaK; ATP binding to DnaK triggers the release of the substrate protein, thus completing the reaction cycle. Several rounds of ATP-dependent interactions between DnaJ, DnaK and GrpE are required for fully efficient folding. Also involved, together with DnaK and GrpE, in the DNA replication of plasmids through activation of initiation proteins. This chain is Chaperone protein DnaJ, found in Chlamydia muridarum (strain MoPn / Nigg).